Consider the following 556-residue polypeptide: Formate--tetrahydrofolate ligase (556 aa).

64–71 (TPAGEGKT) lines the ATP pocket.

Belongs to the formate--tetrahydrofolate ligase family.

It catalyses the reaction (6S)-5,6,7,8-tetrahydrofolate + formate + ATP = (6R)-10-formyltetrahydrofolate + ADP + phosphate. Its pathway is one-carbon metabolism; tetrahydrofolate interconversion. The protein is Formate--tetrahydrofolate ligase of Haemophilus ducreyi (strain 35000HP / ATCC 700724).